A 439-amino-acid chain; its full sequence is Serine--tRNA ligase (439 aa).

Residue 247–249 (TSE) coordinates L-serine. 278–280 (RSE) lines the ATP pocket. Residue Glu301 participates in L-serine binding. Residue 365 to 368 (EISS) participates in ATP binding. An L-serine-binding site is contributed by Ser400.

The protein belongs to the class-II aminoacyl-tRNA synthetase family. Type-1 seryl-tRNA synthetase subfamily. As to quaternary structure, homodimer. The tRNA molecule binds across the dimer.

It localises to the cytoplasm. The enzyme catalyses tRNA(Ser) + L-serine + ATP = L-seryl-tRNA(Ser) + AMP + diphosphate + H(+). It carries out the reaction tRNA(Sec) + L-serine + ATP = L-seryl-tRNA(Sec) + AMP + diphosphate + H(+). It functions in the pathway aminoacyl-tRNA biosynthesis; selenocysteinyl-tRNA(Sec) biosynthesis; L-seryl-tRNA(Sec) from L-serine and tRNA(Sec): step 1/1. In terms of biological role, catalyzes the attachment of serine to tRNA(Ser). Is also able to aminoacylate tRNA(Sec) with serine, to form the misacylated tRNA L-seryl-tRNA(Sec), which will be further converted into selenocysteinyl-tRNA(Sec). The chain is Serine--tRNA ligase from Paracidovorax citrulli (strain AAC00-1) (Acidovorax citrulli).